The chain runs to 107 residues: Anti-adapter protein IraM (107 aa).

Belongs to the IraM/RssC family.

The protein resides in the cytoplasm. In terms of biological role, inhibits RpoS proteolysis by regulating RssB activity, thereby increasing the stability of the sigma stress factor RpoS during magnesium starvation. The sequence is that of Anti-adapter protein IraM from Shigella sonnei (strain Ss046).